Consider the following 393-residue polypeptide: MTILGTALTPKATKVMLLGSGELGKEVVIELQRLGVEVIAVDRYENAPAQQVAHRSYTISMLDGNALKALIEKEKPDYIVPEVEAIATSTLVELEQAGFNVVPTAKATQLTMNREGIRRLAAEKLKLPTSNYQFVDNFDDFQSAVENLGIPCVIKPIMSSSGHGQSILKSKDDLQKAWDYAQQGGRAGAGRVIVEGFVKFDYEITLLTVRHAEGTSFLAPIGHRQEKGDYRESWQPQAMSVQALAKAQHIAEKITTELGGRGIFGVEMFVCGDEVIFNEVSPRPHDTGMVTLISQELSEFALHARAILGLPIPEINLISPAASKAIVVEGKSNQVQFGNLFEVLQEPNTNIRLFGKGEVNGHRRLGVILARDISVDKALEKVSRAYDKLDIQL.

N(1)-(5-phospho-beta-D-ribosyl)glycinamide contacts are provided by residues 22 to 23 and E82; that span reads EL. ATP-binding positions include R114, K155, 160–165, 195–198, and E203; these read SSGHGQ and EGFV. The region spanning 119 to 308 is the ATP-grasp domain; that stretch reads RLAAEKLKLP…EFALHARAIL (190 aa). Mg(2+) contacts are provided by E267 and E279. Residues D286, K356, and 363–364 contribute to the N(1)-(5-phospho-beta-D-ribosyl)glycinamide site; that span reads RR.

It belongs to the PurK/PurT family. As to quaternary structure, homodimer.

The catalysed reaction is N(1)-(5-phospho-beta-D-ribosyl)glycinamide + formate + ATP = N(2)-formyl-N(1)-(5-phospho-beta-D-ribosyl)glycinamide + ADP + phosphate + H(+). It functions in the pathway purine metabolism; IMP biosynthesis via de novo pathway; N(2)-formyl-N(1)-(5-phospho-D-ribosyl)glycinamide from N(1)-(5-phospho-D-ribosyl)glycinamide (formate route): step 1/1. Its function is as follows. Involved in the de novo purine biosynthesis. Catalyzes the transfer of formate to 5-phospho-ribosyl-glycinamide (GAR), producing 5-phospho-ribosyl-N-formylglycinamide (FGAR). Formate is provided by PurU via hydrolysis of 10-formyl-tetrahydrofolate. The sequence is that of Formate-dependent phosphoribosylglycinamide formyltransferase from Histophilus somni (strain 129Pt) (Haemophilus somnus).